Consider the following 172-residue polypeptide: Adenine phosphoribosyltransferase (172 aa).

The protein belongs to the purine/pyrimidine phosphoribosyltransferase family. As to quaternary structure, homodimer.

The protein localises to the cytoplasm. It catalyses the reaction AMP + diphosphate = 5-phospho-alpha-D-ribose 1-diphosphate + adenine. It participates in purine metabolism; AMP biosynthesis via salvage pathway; AMP from adenine: step 1/1. Catalyzes a salvage reaction resulting in the formation of AMP, that is energically less costly than de novo synthesis. The sequence is that of Adenine phosphoribosyltransferase from Clostridium tetani (strain Massachusetts / E88).